The primary structure comprises 165 residues: Endoribonuclease YbeY (165 aa).

Positions 130, 134, and 140 each coordinate Zn(2+).

This sequence belongs to the endoribonuclease YbeY family. Requires Zn(2+) as cofactor.

Its subcellular location is the cytoplasm. Functionally, single strand-specific metallo-endoribonuclease involved in late-stage 70S ribosome quality control and in maturation of the 3' terminus of the 16S rRNA. The polypeptide is Endoribonuclease YbeY (Streptococcus pyogenes serotype M1).